A 358-amino-acid chain; its full sequence is Homoserine O-acetyltransferase (358 aa).

One can recognise an AB hydrolase-1 domain in the interval 41-343 (NAVLICHALT…DYGHDAFLVD (303 aa)). S143 functions as the Nucleophile in the catalytic mechanism. R212 serves as a coordination point for substrate. Catalysis depends on residues D304 and H337. D338 contributes to the substrate binding site.

Homodimer.

The protein resides in the cytoplasm. It carries out the reaction L-homoserine + acetyl-CoA = O-acetyl-L-homoserine + CoA. The protein operates within amino-acid biosynthesis; L-methionine biosynthesis via de novo pathway; O-acetyl-L-homoserine from L-homoserine: step 1/1. Functionally, transfers an acetyl group from acetyl-CoA to L-homoserine, forming acetyl-L-homoserine. Utilizes a ping-pong kinetic mechanism in which the acetyl group of acetyl-CoA is initially transferred to the enzyme to form an acetyl-enzyme intermediate before subsequent transfer to homoserine to form the final product, O-acetylhomoserine. The protein is Homoserine O-acetyltransferase of Haemophilus influenzae (strain ATCC 51907 / DSM 11121 / KW20 / Rd).